A 163-amino-acid chain; its full sequence is Large ribosomal subunit protein bL17 (163 aa).

A disordered region spans residues 127 to 163; sequence KEVKKAKSRRGGKAKKAEGTAPEAPAAESESTTEASE. A compositionally biased stretch (basic residues) spans 128 to 140; it reads EVKKAKSRRGGKA. The segment covering 145–163 has biased composition (low complexity); the sequence is GTAPEAPAAESESTTEASE.

It belongs to the bacterial ribosomal protein bL17 family. Part of the 50S ribosomal subunit. Contacts protein L32.

The polypeptide is Large ribosomal subunit protein bL17 (Flavobacterium johnsoniae (strain ATCC 17061 / DSM 2064 / JCM 8514 / BCRC 14874 / CCUG 350202 / NBRC 14942 / NCIMB 11054 / UW101) (Cytophaga johnsonae)).